Consider the following 502-residue polypeptide: 4,4'-diapophytoene desaturase (4,4'-diaponeurosporene-forming) (502 aa).

Residue 5 to 17 (VIGAGVTGLAAAA) coordinates FAD.

Belongs to the carotenoid/retinoid oxidoreductase family. CrtN subfamily.

It catalyses the reaction 15-cis-4,4'-diapophytoene + 3 FAD + 3 H(+) = all-trans-4,4'-diaponeurosporene + 3 FADH2. Its pathway is carotenoid biosynthesis; staphyloxanthin biosynthesis; staphyloxanthin from farnesyl diphosphate: step 2/5. In terms of biological role, involved in the biosynthesis of the yellow-orange carotenoid staphyloxanthin, which plays a role in the virulence via its protective function against oxidative stress. Catalyzes three successive dehydrogenation reactions that lead to the introduction of three double bonds into 4,4'-diapophytoene (dehydrosqualene), with 4,4'-diapophytofluene and 4,4'-diapo-zeta-carotene as intermediates, and 4,4'-diaponeurosporene (the major deep-yellow pigment in staphylococci strains) as the end product. In Staphylococcus aureus (strain COL), this protein is 4,4'-diapophytoene desaturase (4,4'-diaponeurosporene-forming).